A 344-amino-acid polypeptide reads, in one-letter code: UDP-N-acetylenolpyruvoylglucosamine reductase (344 aa).

Residues 15-185 enclose the FAD-binding PCMH-type domain; it reads LPACANQIIE…ISVGLKLAKA (171 aa). Arginine 161 is an active-site residue. Residue serine 231 is the Proton donor of the active site. Glutamate 327 is a catalytic residue.

This sequence belongs to the MurB family. FAD serves as cofactor.

The protein resides in the cytoplasm. The enzyme catalyses UDP-N-acetyl-alpha-D-muramate + NADP(+) = UDP-N-acetyl-3-O-(1-carboxyvinyl)-alpha-D-glucosamine + NADPH + H(+). It functions in the pathway cell wall biogenesis; peptidoglycan biosynthesis. In terms of biological role, cell wall formation. In Haemophilus ducreyi (strain 35000HP / ATCC 700724), this protein is UDP-N-acetylenolpyruvoylglucosamine reductase.